An 812-amino-acid polypeptide reads, in one-letter code: Toll-like receptor 10 (812 aa).

The signal sequence occupies residues 1–19 (MRYIRSIYIFCSIVTSVRS). At 20 to 577 (GASELPEERE…VHLPEISCNT (558 aa)) the chain is on the extracellular side. LRR repeat units lie at residues 24 to 46 (LPEE…PEGL), 49 to 70 (ITTT…DFRS), 73 to 94 (KLKV…TFEF), 97 to 118 (ELSY…SLAG), and 119 to 139 (LRHL…VETG). Asparagine 33 carries an N-linked (GlcNAc...) asparagine glycan. Asparagine 140 carries N-linked (GlcNAc...) asparagine glycosylation. The stretch at 143-166 (HLETLGLSGAKIQKSDFQKIAHLQ) is one LRR 6 repeat. Asparagine 189 carries N-linked (GlcNAc...) asparagine glycosylation. LRR repeat units follow at residues 296–321 (SNTV…ESIY), 325–348 (TKMD…PMYP), 350–373 (RFQY…IQLP), and 374–395 (HLKT…SHFA). Asparagine 331 carries N-linked (GlcNAc...) asparagine glycosylation. An N-linked (GlcNAc...) asparagine glycan is attached at asparagine 397. 5 LRR repeats span residues 399 to 420 (SLRH…NCLW), 423 to 443 (TLVT…GCLP), 445 to 467 (NIQI…THLT), 468 to 489 (SLRE…SHFR), and 490 to 510 (RLLV…DFFQ). Asparagine 428 is a glycosylation site (N-linked (GlcNAc...) asparagine). The LRRCT domain maps to 523–577 (NPFRCTCELRDFIQLGKYSEGMMVGWSDSYICEYPLNLKGTQLKDVHLPEISCNT). Residues 578-598 (GLLIVTIVVVMLVLGMAVAFC) traverse the membrane as a helical segment. Residues 599–812 (CLHFDLPWYL…AISLIRTDCL (214 aa)) are Cytoplasmic-facing. The TIR domain maps to 633–776 (VQFHVFISYS…LFWANLRAAL (144 aa)).

It belongs to the Toll-like receptor family. As to quaternary structure, binds MYD88 via their respective TIR domains.

The protein localises to the membrane. Functionally, participates in the innate immune response to microbial agents. Acts via MYD88 and TRAF6, leading to NF-kappa-B activation, cytokine secretion and the inflammatory response. The protein is Toll-like receptor 10 (TLR10) of Bos taurus (Bovine).